The sequence spans 925 residues: Nuclear factor of activated T-cells, cytoplasmic 2 (925 aa).

Positions 1 to 95 (MNAPERQPQP…FGEPDRVGPQ (95 aa)) are disordered. Ser23 carries the phosphoserine modification. The short motif at 26-34 (DELDFSILF) is the 9aaTAD element. Phosphoserine is present on residues Ser99, Ser107, and Ser110. Residues 111–116 (PRIEIT) are calcineurin-binding. The tract at residues 119-199 (HELIQAVGPL…CVSPNNGGPD (81 aa)) is transactivation domain A (TAD-A). Phosphoserine is present on residues Ser148, Ser168, Ser171, Ser172, Ser174, Ser175, Ser177, and Ser180. A required for cytoplasmic retention of the phosphorylated form region spans residues 161–175 (YREPLCLSPASSGSS). A run of 2 repeats spans residues 184-200 (SPYTSPCVSPNNGGPDD) and 213-229 (SPRTSPIMSPRTSLAED). A 3 X approximate SP repeats region spans residues 184–286 (SPYTSPCVSP…PQPSSHVAPQ (103 aa)). The disordered stretch occupies residues 195–297 (NGGPDDLCPQ…HGSPAGYPPV (103 aa)). Phosphoserine is present on residues Ser213, Ser217, Ser221, Ser236, and Ser243. Residues 214–224 (PRTSPIMSPRT) show a composition bias toward polar residues. The Nuclear localization signal signature appears at 251–253 (KRR). Residues Ser255, Ser268, Ser274, Ser276, Ser280, Ser326, Ser330, and Ser363 each carry the phosphoserine modification. Low complexity predominate over residues 264–281 (PPGASPQRSRSPSPQPSS). The 3; approximate repeat unit spans residues 272–286 (SRSPSPQPSSHVAPQ). Positions 392–574 (ASLPPLEWPL…NPIECSQRSA (183 aa)) constitute an RHD domain. A DNA-binding region spans residues 421-428 (RAHYETEG). The Nuclear localization signal motif lies at 664–666 (KRK). 5 positions are modified to phosphoserine: Ser755, Ser757, Ser759, Ser856, and Ser859. The disordered stretch occupies residues 839 to 894 (PGTTRPGPPPVSQGQRLSPGSYPTVIQQQNATSQRAAKNGPPVSDQKEVLPAGVTI). The segment covering 862-874 (TVIQQQNATSQRA) has biased composition (polar residues). The short motif at 904–913 (YLDDVNEIIR) is the Nuclear export signal element.

As to quaternary structure, member of the multicomponent NFATC transcription complex that consists of at least two components, a pre-existing cytoplasmic component NFATC2 and an inducible nuclear component NFATC1. Other members such as NFATC4, NFATC3 or members of the activating protein-1 family, MAF, GATA4 and Cbp/p300 can also bind the complex. The phosphorylated form specifically interacts with XPO1; which mediates nuclear export. NFATC proteins bind to DNA as monomers. Interacts with NFATC2IP. Interacts with FOXP3. Interacts with TBX21 ('Thr-303' phosphorylated form). Interacts with KAT2A. Interacts with HOMER2 and HOMER3; this interaction competes with calcineurin/PPP3CA-binding and hence prevents NFATC2 dephosphorylation and activation. Interacts with protein phosphatase PPP3CA/calcineurin A. Interacts with AKAP5 (via leucine zipper domain); this is required for NFATC2/NFAT1 recruitment to CRAC channels. In terms of processing, in resting cells, phosphorylated by NFATC-kinase on at least 18 sites in the 99-363 region. Upon cell stimulation, all these sites except Ser-243 are dephosphorylated by calcineurin. Dephosphorylation induces a conformational change that simultaneously exposes an NLS and masks an NES, which results in nuclear localization. Simultaneously, Ser-53 or Ser-56 is phosphorylated; which is required for full transcriptional activity. Ubiquitinated in endothelial cells by RNF213 downstream of the non-canonical Wnt signaling pathway, leading to its degradation by the proteasome. Expressed in thymus, spleen, heart, testis, brain, placenta, muscle and pancreas. Isoform 1 is highly expressed in the small intestine, heart, testis, prostate, thymus, placenta and thyroid. Isoform 3 is highly expressed in stomach, uterus, placenta, trachea and thyroid.

It is found in the cytoplasm. The protein resides in the nucleus. Its function is as follows. Plays a role in the inducible expression of cytokine genes in T-cells, especially in the induction of the IL-2, IL-3, IL-4, TNF-alpha or GM-CSF. Promotes invasive migration through the activation of GPC6 expression and WNT5A signaling pathway. Is involved in the negative regulation of chondrogenesis. Recruited by AKAP5 to ORAI1 pore-forming subunit of CRAC channels in Ca(2+) signaling microdomains where store-operated Ca(2+) influx is coupled to calmodulin and calcineurin signaling and activation of NFAT-dependent transcriptional responses. This Homo sapiens (Human) protein is Nuclear factor of activated T-cells, cytoplasmic 2 (NFATC2).